Consider the following 139-residue polypeptide: Endoribonuclease YbeY (139 aa).

Residues H99, H103, and H109 each coordinate Zn(2+).

The protein belongs to the endoribonuclease YbeY family. Requires Zn(2+) as cofactor.

The protein localises to the cytoplasm. Single strand-specific metallo-endoribonuclease involved in late-stage 70S ribosome quality control and in maturation of the 3' terminus of the 16S rRNA. The chain is Endoribonuclease YbeY from Nautilia profundicola (strain ATCC BAA-1463 / DSM 18972 / AmH).